We begin with the raw amino-acid sequence, 392 residues long: Probable tRNA sulfurtransferase (392 aa).

The THUMP domain maps to 61 to 168 (DEALKLLSKV…EFTYIYSEII (108 aa)). ATP is bound by residues 185-186 (LL), 210-211 (HF), R267, G289, and Q298.

Belongs to the ThiI family.

Its subcellular location is the cytoplasm. The catalysed reaction is [ThiI sulfur-carrier protein]-S-sulfanyl-L-cysteine + a uridine in tRNA + 2 reduced [2Fe-2S]-[ferredoxin] + ATP + H(+) = [ThiI sulfur-carrier protein]-L-cysteine + a 4-thiouridine in tRNA + 2 oxidized [2Fe-2S]-[ferredoxin] + AMP + diphosphate. The enzyme catalyses [ThiS sulfur-carrier protein]-C-terminal Gly-Gly-AMP + S-sulfanyl-L-cysteinyl-[cysteine desulfurase] + AH2 = [ThiS sulfur-carrier protein]-C-terminal-Gly-aminoethanethioate + L-cysteinyl-[cysteine desulfurase] + A + AMP + 2 H(+). Its pathway is cofactor biosynthesis; thiamine diphosphate biosynthesis. Functionally, catalyzes the ATP-dependent transfer of a sulfur to tRNA to produce 4-thiouridine in position 8 of tRNAs, which functions as a near-UV photosensor. Also catalyzes the transfer of sulfur to the sulfur carrier protein ThiS, forming ThiS-thiocarboxylate. This is a step in the synthesis of thiazole, in the thiamine biosynthesis pathway. The sulfur is donated as persulfide by IscS. This is Probable tRNA sulfurtransferase from Acetivibrio thermocellus (strain ATCC 27405 / DSM 1237 / JCM 9322 / NBRC 103400 / NCIMB 10682 / NRRL B-4536 / VPI 7372) (Clostridium thermocellum).